We begin with the raw amino-acid sequence, 800 residues long: Protocadherin beta-10 (800 aa).

The N-terminal stretch at 1-26 (MAVRELCFPRQRQVLFLFLFWGVSLA) is a signal peptide. Topologically, residues 27–692 (GSGFGRYSVT…AEADLLTVYL (666 aa)) are extracellular. 5 Cadherin domains span residues 35–133 (VTEE…APVF), 138–242 (TVLK…APQF), 247–347 (YETQ…PPEL), 352–451 (FSNS…APAF), and 456–561 (YTLF…SPFV). 2 N-linked (GlcNAc...) asparagine glycosylation sites follow: asparagine 169 and asparagine 181. N-linked (GlcNAc...) asparagine glycans are attached at residues asparagine 418 and asparagine 436. N-linked (GlcNAc...) asparagine glycosylation occurs at asparagine 567. The Cadherin 6 domain maps to 568 to 671 (GSAPCTELVP…LVDGFSQPYL (104 aa)). The helical transmembrane segment at 693–713 (VVALASVSSLFLLSVLLFVAV) threads the bilayer. Residues 714-800 (RLCRRSRAAS…FRNSFGFNIQ (87 aa)) lie on the Cytoplasmic side of the membrane.

The protein localises to the cell membrane. In terms of biological role, potential calcium-dependent cell-adhesion protein. May be involved in the establishment and maintenance of specific neuronal connections in the brain. This chain is Protocadherin beta-10 (PCDHB10), found in Homo sapiens (Human).